The sequence spans 340 residues: Methionine import ATP-binding protein MetN (340 aa).

The 240-residue stretch at 6–245 (IEFEGITKVF…PQTNVAKRFV (240 aa)) folds into the ABC transporter domain. 42-49 (GYSGAGKS) is a binding site for ATP.

Belongs to the ABC transporter superfamily. Methionine importer (TC 3.A.1.24) family. As to quaternary structure, the complex is composed of two ATP-binding proteins (MetN), two transmembrane proteins (MetI) and a solute-binding protein (MetQ).

The protein localises to the cell membrane. It carries out the reaction L-methionine(out) + ATP + H2O = L-methionine(in) + ADP + phosphate + H(+). The catalysed reaction is D-methionine(out) + ATP + H2O = D-methionine(in) + ADP + phosphate + H(+). Part of the ABC transporter complex MetNIQ involved in methionine import. Responsible for energy coupling to the transport system. In Corynebacterium diphtheriae (strain ATCC 700971 / NCTC 13129 / Biotype gravis), this protein is Methionine import ATP-binding protein MetN.